The sequence spans 102 residues: Fe-S protein maturation auxiliary factor YitW (102 aa).

The protein belongs to the MIP18 family.

Functionally, involved in the maturation of iron-sulfur (Fe-S) proteins. May function as a Fe-S cluster carrier. The polypeptide is Fe-S protein maturation auxiliary factor YitW (yitW) (Bacillus subtilis (strain 168)).